Reading from the N-terminus, the 189-residue chain is ATP synthase subunit b (189 aa).

A helical membrane pass occupies residues 7 to 27; sequence LLIAALAVAPLAHAAEGGFVG.

This sequence belongs to the ATPase B chain family. In terms of assembly, F-type ATPases have 2 components, F(1) - the catalytic core - and F(0) - the membrane proton channel. F(1) has five subunits: alpha(3), beta(3), gamma(1), delta(1), epsilon(1). F(0) has three main subunits: a(1), b(2) and c(10-14). The alpha and beta chains form an alternating ring which encloses part of the gamma chain. F(1) is attached to F(0) by a central stalk formed by the gamma and epsilon chains, while a peripheral stalk is formed by the delta and b chains.

Its subcellular location is the cell inner membrane. In terms of biological role, f(1)F(0) ATP synthase produces ATP from ADP in the presence of a proton or sodium gradient. F-type ATPases consist of two structural domains, F(1) containing the extramembraneous catalytic core and F(0) containing the membrane proton channel, linked together by a central stalk and a peripheral stalk. During catalysis, ATP synthesis in the catalytic domain of F(1) is coupled via a rotary mechanism of the central stalk subunits to proton translocation. Functionally, component of the F(0) channel, it forms part of the peripheral stalk, linking F(1) to F(0). The sequence is that of ATP synthase subunit b from Hyphomonas neptunium (strain ATCC 15444).